The following is a 179-amino-acid chain: Peptidyl-tRNA hydrolase (179 aa).

Residue tyrosine 15 coordinates tRNA. Residue histidine 20 is the Proton acceptor of the active site. Tyrosine 66, asparagine 68, and asparagine 114 together coordinate tRNA.

It belongs to the PTH family. Monomer.

Its subcellular location is the cytoplasm. It catalyses the reaction an N-acyl-L-alpha-aminoacyl-tRNA + H2O = an N-acyl-L-amino acid + a tRNA + H(+). Hydrolyzes ribosome-free peptidyl-tRNAs (with 1 or more amino acids incorporated), which drop off the ribosome during protein synthesis, or as a result of ribosome stalling. Functionally, catalyzes the release of premature peptidyl moieties from peptidyl-tRNA molecules trapped in stalled 50S ribosomal subunits, and thus maintains levels of free tRNAs and 50S ribosomes. The sequence is that of Peptidyl-tRNA hydrolase from Chlamydia trachomatis serovar L2b (strain UCH-1/proctitis).